The chain runs to 158 residues: Small ribosomal subunit protein bS6 (158 aa).

Positions 98–158 are disordered; that stretch reads EAPSAPLARR…DRDEDQNEEN (61 aa). Basic and acidic residues-rich tracts occupy residues 106-117 and 127-150; these read RRGEDRDRDRGF and DSGR…RSDR.

This sequence belongs to the bacterial ribosomal protein bS6 family.

In terms of biological role, binds together with bS18 to 16S ribosomal RNA. The protein is Small ribosomal subunit protein bS6 of Acidiphilium cryptum (strain JF-5).